Here is a 1324-residue protein sequence, read N- to C-terminus: Myotubularin-related protein DDB_G0290005 (1324 aa).

The interval 140–276 (KYHDNTTPNN…TSSTNGNCST (137 aa)) is disordered. Over residues 144 to 180 (NTTPNNNNNNNNNNNNNNNNTNNNNNNNINKSNNSST) the composition is skewed to low complexity. Polar residues predominate over residues 181-194 (DQLNSFSLEKQPSQ). A compositionally biased stretch (low complexity) spans 195 to 222 (NENLNNNNNNNNNNNNGNNNINNNNLMN). Positions 223–247 (SLTQPSTSSRSRLLKSNSTPINLNE) are enriched in polar residues. The segment covering 248–276 (SSTSTNSPTLSSTTTTTTTTSSTNGNCST) has biased composition (low complexity). The Myotubularin phosphatase domain occupies 349–807 (GWLFYDPIEE…KGVQLWSDYF (459 aa)). Substrate is bound by residues 514-515 (NI), 575-581 (CIDGWDR), and arginine 621. The active-site Phosphocysteine intermediate is cysteine 575. 5 disordered regions span residues 624-664 (QSIS…TTTS), 841-1043 (QKKK…QQQE), 1066-1110 (EQQE…QQQT), 1144-1213 (RKQE…LTMP), and 1232-1296 (LHPN…DNTS). 2 stretches are compositionally biased toward low complexity: residues 625-664 (SISS…TTTS) and 852-864 (GASG…SGSS). The span at 865 to 882 (SKHHHHHHHHHHHHHHRK) shows a compositional bias: basic residues. The segment covering 883-894 (STDEKDSKEKSS) has biased composition (basic and acidic residues). Composition is skewed to low complexity over residues 899-914 (SRTS…STSS) and 927-973 (TITT…TTTP). A compositionally biased stretch (basic and acidic residues) spans 988 to 1002 (DKLKSPSGDDIKQEQ). Polar residues predominate over residues 1005 to 1024 (MNQFTSQHPNNQMESSSEIN). Residues 1020–1195 (SSEINQQNEQ…LEQQKPKADI (176 aa)) are a coiled coil. Over residues 1025-1043 (QQNEQSQLEQQQEQQQQQE) the composition is skewed to low complexity. Residues 1079–1090 (PNETITYSMESD) show a composition bias toward polar residues. Over residues 1091–1109 (SQSSISQNQNQLQQQQQQQ) the composition is skewed to low complexity. A compositionally biased stretch (basic and acidic residues) spans 1144-1193 (RKQEKEKRKLEKEKKQKERAERKLEKEKKRDQKEREQKEKELLEQQKPKA). The span at 1234-1243 (PNLSDQNSQT) shows a compositional bias: polar residues. 2 stretches are compositionally biased toward low complexity: residues 1244–1258 (NSSG…NSPN) and 1265–1294 (SNLS…NNDN).

The protein belongs to the protein-tyrosine phosphatase family. Non-receptor class myotubularin subfamily.

It localises to the cytoplasm. In terms of biological role, phosphatase that acts on lipids with a phosphoinositol headgroup. This chain is Myotubularin-related protein DDB_G0290005, found in Dictyostelium discoideum (Social amoeba).